The primary structure comprises 103 residues: Histone H4 (103 aa).

Lys6 is subject to N6-acetyl-N6-methyllysine; alternate. 3 positions are modified to N6-methyllysine; alternate: Lys6, Lys9, and Lys13. An N6-acetyl-N6-methyllysine; alternate modification is found at Lys13. Residues 17–21 (KRHRK) mediate DNA binding. Residue Lys92 is modified to N6-glutaryllysine.

It belongs to the histone H4 family. In terms of assembly, the nucleosome is a histone octamer containing two molecules each of H2A, H2B, H3 and H4 assembled in one H3-H4 heterotetramer and two H2A-H2B heterodimers. The octamer wraps approximately 147 bp of DNA. Glutarylation at Lys-92 (H4K91glu) destabilizes nucleosomes by promoting dissociation of the H2A-H2B dimers from nucleosomes.

It localises to the nucleus. It is found in the chromosome. Functionally, core component of nucleosome. Nucleosomes wrap and compact DNA into chromatin, limiting DNA accessibility to the cellular machineries which require DNA as a template. Histones thereby play a central role in transcription regulation, DNA repair, DNA replication and chromosomal stability. DNA accessibility is regulated via a complex set of post-translational modifications of histones, also called histone code, and nucleosome remodeling. This Blastobotrys adeninivorans (Yeast) protein is Histone H4 (ahsb4).